Consider the following 113-residue polypeptide: U11-theraphotoxin-Hhn1a (113 aa).

A signal peptide spans 1-21 (MNTVRVTFLLVFVLAVSLGQA). Residues 22 to 74 (DKDENRMEMQEKTEQGKSYLDFAENLLLQKLEELEAKPLEEDSEESRNSRQKR) constitute a propeptide that is removed on maturation. Residues 57-69 (AKPLEEDSEESRN) are compositionally biased toward basic and acidic residues. Residues 57–83 (AKPLEEDSEESRNSRQKRCIGEGVPCD) are disordered. Disulfide bonds link C75/C90, C82/C95, and C89/C110.

Belongs to the neurotoxin 14 (magi-1) family. 01 (HNTX-16) subfamily. In terms of tissue distribution, expressed by the venom gland.

The protein resides in the secreted. Functionally, probable ion channel inhibitor. The chain is U11-theraphotoxin-Hhn1a from Cyriopagopus hainanus (Chinese bird spider).